The chain runs to 449 residues: Glutamyl-tRNA reductase (449 aa).

Substrate is bound by residues T49 to R52, S109, E114 to Q116, and Q120. Residue C50 is the Nucleophile of the active site. Residue G189–S194 coordinates NADP(+). Residues N427–R449 are disordered.

The protein belongs to the glutamyl-tRNA reductase family. In terms of assembly, homodimer.

It catalyses the reaction (S)-4-amino-5-oxopentanoate + tRNA(Glu) + NADP(+) = L-glutamyl-tRNA(Glu) + NADPH + H(+). It participates in porphyrin-containing compound metabolism; protoporphyrin-IX biosynthesis; 5-aminolevulinate from L-glutamyl-tRNA(Glu): step 1/2. Catalyzes the NADPH-dependent reduction of glutamyl-tRNA(Glu) to glutamate 1-semialdehyde (GSA). This chain is Glutamyl-tRNA reductase, found in Carboxydothermus hydrogenoformans (strain ATCC BAA-161 / DSM 6008 / Z-2901).